The following is a 99-amino-acid chain: Malonate decarboxylase acyl carrier protein (99 aa).

Ser-25 is modified (O-(phosphoribosyl dephospho-coenzyme A)serine).

The protein belongs to the MdcC family. Covalently binds the prosthetic group of malonate decarboxylase.

Its subcellular location is the cytoplasm. Functionally, subunit of malonate decarboxylase, it is an acyl carrier protein to which acetyl and malonyl thioester residues are bound via a 2'-(5''-phosphoribosyl)-3'-dephospho-CoA prosthetic group and turn over during the catalytic mechanism. The polypeptide is Malonate decarboxylase acyl carrier protein (Stutzerimonas stutzeri (strain A1501) (Pseudomonas stutzeri)).